Reading from the N-terminus, the 762-residue chain is 5-methyltetrahydropteroyltriglutamate--homocysteine methyltransferase (762 aa).

Residues 17–20 and lysine 111 each bind 5-methyltetrahydropteroyltri-L-glutamate; that span reads REWK. Residues 435 to 437 and glutamate 488 each bind L-homocysteine; that span reads IGS. Residues 435–437 and glutamate 488 each bind L-methionine; that span reads IGS. Residues 519 to 520 and tryptophan 565 contribute to the 5-methyltetrahydropteroyltri-L-glutamate site; that span reads RC. Aspartate 603 contributes to the L-homocysteine binding site. Aspartate 603 contacts L-methionine. Residue glutamate 609 participates in 5-methyltetrahydropteroyltri-L-glutamate binding. Residues histidine 645, cysteine 647, and glutamate 669 each coordinate Zn(2+). Residue histidine 698 is the Proton donor of the active site. Cysteine 730 serves as a coordination point for Zn(2+).

This sequence belongs to the vitamin-B12 independent methionine synthase family. Requires Zn(2+) as cofactor.

The enzyme catalyses 5-methyltetrahydropteroyltri-L-glutamate + L-homocysteine = tetrahydropteroyltri-L-glutamate + L-methionine. Its pathway is amino-acid biosynthesis; L-methionine biosynthesis via de novo pathway; L-methionine from L-homocysteine (MetE route): step 1/1. Functionally, catalyzes the transfer of a methyl group from 5-methyltetrahydrofolate to homocysteine resulting in methionine formation. The chain is 5-methyltetrahydropteroyltriglutamate--homocysteine methyltransferase from Bacillus cereus (strain ZK / E33L).